A 136-amino-acid polypeptide reads, in one-letter code: Protein PsiE homolog (136 aa).

4 consecutive transmembrane segments (helical) span residues 15-35 (ILQT…VVFL), 55-75 (YELV…ALIV), 82-102 (FHFP…RLII), and 108-128 (PLDV…LWLC).

Belongs to the PsiE family.

It localises to the cell inner membrane. The polypeptide is Protein PsiE homolog (Enterobacter sp. (strain 638)).